Here is a 408-residue protein sequence, read N- to C-terminus: NADH-quinone oxidoreductase subunit D (408 aa).

Belongs to the complex I 49 kDa subunit family. NDH-1 is composed of 14 different subunits. Subunits NuoB, C, D, E, F, and G constitute the peripheral sector of the complex.

It localises to the cell inner membrane. The enzyme catalyses a quinone + NADH + 5 H(+)(in) = a quinol + NAD(+) + 4 H(+)(out). NDH-1 shuttles electrons from NADH, via FMN and iron-sulfur (Fe-S) centers, to quinones in the respiratory chain. The immediate electron acceptor for the enzyme in this species is believed to be ubiquinone. Couples the redox reaction to proton translocation (for every two electrons transferred, four hydrogen ions are translocated across the cytoplasmic membrane), and thus conserves the redox energy in a proton gradient. The polypeptide is NADH-quinone oxidoreductase subunit D (Campylobacter jejuni subsp. doylei (strain ATCC BAA-1458 / RM4099 / 269.97)).